The chain runs to 422 residues: MVMILRRSLINQGADSGAHRTFIPELHTPKMSQGPTLLSCGIMENDRWRDLDRKCPLQIDQPSASIWECLPEKCQDGSLWHQEAVTACAVTSLIKDLNINDHNGNPSAPPSKRQCRSLSFSDEMSSCRTSWRPLGSKVWTPVEKRRCYSGGSVQRYSNGVSPMQRSSSFSLPARANGLSSPCHQSSLHHRFGGQPCQGAPGSAPCGQAGDSWSPDPHPVGGGRLDLQRSLSCSHEQFSFPEYCPPSANSTPASTPELARRSSGLARSRSQPCVLNDKKIGVKRRRPDEVQEQRPSLDLAKMAQNCQTFSSLSCLNMGVDDHSSQSPFALVSSTRSWTALLSASSPGGRTPAGTPVPEPVPHSFDDQFTCQEDLSCDESDGCSLDEDCCRKGDPATSWRDRGACTNSLCSLDGELDIEQIENN.

Phosphoserine is present on residues Ser-119, Ser-168, Ser-170, Ser-180, Ser-213, and Ser-269. 2 disordered regions span residues 193 to 225 (GQPC…GRLD) and 243 to 269 (CPPS…RSRS). A compositionally biased stretch (low complexity) spans 244 to 269 (PPSANSTPASTPELARRSSGLARSRS). Positions 282–285 (KRRR) match the Nuclear localization signal motif. Residues Ser-335 and Ser-344 each carry the phosphoserine modification.

The protein belongs to the FAM53 family. Interacts with CTNNB1.

Its subcellular location is the nucleus. Acts as a regulator of Wnt signaling pathway by regulating beta-catenin (CTNNB1) nuclear localization. This Mus musculus (Mouse) protein is Protein FAM53B.